We begin with the raw amino-acid sequence, 492 residues long: ATP synthase subunit beta, chloroplastic (492 aa).

ATP is bound at residue 170–177 (GGAGVGKT).

This sequence belongs to the ATPase alpha/beta chains family. In terms of assembly, F-type ATPases have 2 components, CF(1) - the catalytic core - and CF(0) - the membrane proton channel. CF(1) has five subunits: alpha(3), beta(3), gamma(1), delta(1), epsilon(1). CF(0) has four main subunits: a(1), b(1), b'(1) and c(9-12).

It is found in the plastid. The protein localises to the chloroplast thylakoid membrane. It catalyses the reaction ATP + H2O + 4 H(+)(in) = ADP + phosphate + 5 H(+)(out). Functionally, produces ATP from ADP in the presence of a proton gradient across the membrane. The catalytic sites are hosted primarily by the beta subunits. The polypeptide is ATP synthase subunit beta, chloroplastic (Psilotum nudum (Whisk fern)).